We begin with the raw amino-acid sequence, 229 residues long: Potassium/proton antiporter CemA (229 aa).

The next 3 membrane-spanning stretches (helical) occupy residues 7-27 (LNPL…SLSF), 106-126 (IILH…YSIL), and 189-209 (IISG…KYWI).

It belongs to the CemA family.

The protein localises to the plastid. It localises to the chloroplast inner membrane. The catalysed reaction is K(+)(in) + H(+)(out) = K(+)(out) + H(+)(in). Contributes to K(+)/H(+) antiport activity by supporting proton efflux to control proton extrusion and homeostasis in chloroplasts in a light-dependent manner to modulate photosynthesis. Prevents excessive induction of non-photochemical quenching (NPQ) under continuous-light conditions. Indirectly promotes efficient inorganic carbon uptake into chloroplasts. This is Potassium/proton antiporter CemA from Nymphaea alba (White water-lily).